The chain runs to 225 residues: NAD(P)H-quinone oxidoreductase subunit K, chloroplastic (225 aa).

The [4Fe-4S] cluster site is built by Cys-43, Cys-44, Cys-108, and Cys-139.

It belongs to the complex I 20 kDa subunit family. In terms of assembly, NDH is composed of at least 16 different subunits, 5 of which are encoded in the nucleus. Requires [4Fe-4S] cluster as cofactor.

The protein localises to the plastid. Its subcellular location is the chloroplast thylakoid membrane. The catalysed reaction is a plastoquinone + NADH + (n+1) H(+)(in) = a plastoquinol + NAD(+) + n H(+)(out). It catalyses the reaction a plastoquinone + NADPH + (n+1) H(+)(in) = a plastoquinol + NADP(+) + n H(+)(out). NDH shuttles electrons from NAD(P)H:plastoquinone, via FMN and iron-sulfur (Fe-S) centers, to quinones in the photosynthetic chain and possibly in a chloroplast respiratory chain. The immediate electron acceptor for the enzyme in this species is believed to be plastoquinone. Couples the redox reaction to proton translocation, and thus conserves the redox energy in a proton gradient. The sequence is that of NAD(P)H-quinone oxidoreductase subunit K, chloroplastic from Nandina domestica (Heavenly bamboo).